Consider the following 228-residue polypeptide: Cytochrome c oxidase subunit 2 (228 aa).

Residues 1-14 (MAYPLQLGFQDATS) are Mitochondrial intermembrane-facing. A helical membrane pass occupies residues 15–45 (PVMEELLHFHDHTLMIIFLISSLVLYIIMLM). At 46–59 (LTSKLVHTNMMNVQ) the chain is on the mitochondrial matrix side. Residues 60 to 87 (EMEMIWTILPAIILILIALPSLHTLYMM) form a helical membrane-spanning segment. Residues 88-228 (DEINNPLLTI…FENWSASLAQ (141 aa)) are Mitochondrial intermembrane-facing. Positions 161, 196, 198, 200, 204, and 207 each coordinate Cu cation. Glu-198 contacts Mg(2+). The residue at position 218 (Tyr-218) is a Phosphotyrosine.

Belongs to the cytochrome c oxidase subunit 2 family. Component of the cytochrome c oxidase (complex IV, CIV), a multisubunit enzyme composed of 14 subunits. The complex is composed of a catalytic core of 3 subunits MT-CO1, MT-CO2 and MT-CO3, encoded in the mitochondrial DNA, and 11 supernumerary subunits COX4I, COX5A, COX5B, COX6A, COX6B, COX6C, COX7A, COX7B, COX7C, COX8 and NDUFA4, which are encoded in the nuclear genome. The complex exists as a monomer or a dimer and forms supercomplexes (SCs) in the inner mitochondrial membrane with NADH-ubiquinone oxidoreductase (complex I, CI) and ubiquinol-cytochrome c oxidoreductase (cytochrome b-c1 complex, complex III, CIII), resulting in different assemblies (supercomplex SCI(1)III(2)IV(1) and megacomplex MCI(2)III(2)IV(2)). Found in a complex with TMEM177, COA6, COX18, COX20, SCO1 and SCO2. Interacts with TMEM177 in a COX20-dependent manner. Interacts with COX20. Interacts with COX16. It depends on Cu cation as a cofactor.

The protein resides in the mitochondrion inner membrane. The catalysed reaction is 4 Fe(II)-[cytochrome c] + O2 + 8 H(+)(in) = 4 Fe(III)-[cytochrome c] + 2 H2O + 4 H(+)(out). Its function is as follows. Component of the cytochrome c oxidase, the last enzyme in the mitochondrial electron transport chain which drives oxidative phosphorylation. The respiratory chain contains 3 multisubunit complexes succinate dehydrogenase (complex II, CII), ubiquinol-cytochrome c oxidoreductase (cytochrome b-c1 complex, complex III, CIII) and cytochrome c oxidase (complex IV, CIV), that cooperate to transfer electrons derived from NADH and succinate to molecular oxygen, creating an electrochemical gradient over the inner membrane that drives transmembrane transport and the ATP synthase. Cytochrome c oxidase is the component of the respiratory chain that catalyzes the reduction of oxygen to water. Electrons originating from reduced cytochrome c in the intermembrane space (IMS) are transferred via the dinuclear copper A center (CU(A)) of subunit 2 and heme A of subunit 1 to the active site in subunit 1, a binuclear center (BNC) formed by heme A3 and copper B (CU(B)). The BNC reduces molecular oxygen to 2 water molecules using 4 electrons from cytochrome c in the IMS and 4 protons from the mitochondrial matrix. The protein is Cytochrome c oxidase subunit 2 (MT-CO2) of Loxodonta africana (African elephant).